A 425-amino-acid chain; its full sequence is Probable threonylcarbamoyladenosine tRNA methylthiotransferase (425 aa).

An MTTase N-terminal domain is found at 2-110 (VKIYIENYGC…IIQAVEYALR (109 aa)). The [4Fe-4S] cluster site is built by cysteine 11, cysteine 47, cysteine 76, cysteine 148, cysteine 152, and cysteine 155. Positions 133–363 (LSPRTVYFIV…HRIRLQISYE (231 aa)) constitute a Radical SAM core domain. The TRAM domain maps to 366 to 425 (QKYIGKKVEVLIHGEGKKGNVDAVTMNYKHVILPFGNSGEFRIAEIKNATSTYLLGEVMS).

This sequence belongs to the methylthiotransferase family. CDKAL1 subfamily. The cofactor is [4Fe-4S] cluster.

It carries out the reaction N(6)-L-threonylcarbamoyladenosine(37) in tRNA + (sulfur carrier)-SH + AH2 + 2 S-adenosyl-L-methionine = 2-methylsulfanyl-N(6)-L-threonylcarbamoyladenosine(37) in tRNA + (sulfur carrier)-H + 5'-deoxyadenosine + L-methionine + A + S-adenosyl-L-homocysteine + 2 H(+). Catalyzes the methylthiolation of N6-threonylcarbamoyladenosine (t(6)A), leading to the formation of 2-methylthio-N6-threonylcarbamoyladenosine (ms(2)t(6)A) at position 37 in tRNAs that read codons beginning with adenine. The polypeptide is Probable threonylcarbamoyladenosine tRNA methylthiotransferase (Pyrococcus abyssi (strain GE5 / Orsay)).